Consider the following 90-residue polypeptide: UPF0329 protein ECU04_1650 (90 aa).

It belongs to the UPF0329 family.

This chain is UPF0329 protein ECU04_1650, found in Encephalitozoon cuniculi (strain GB-M1) (Microsporidian parasite).